Here is a 923-residue protein sequence, read N- to C-terminus: Glucosidase 2 subunit alpha (923 aa).

The first 25 residues, 1 to 25 (MRYHGICWFIFQAAIIFAIFGSCQG), serve as a signal peptide directing secretion. Residue N262 is glycosylated (N-linked (GlcNAc...) asparagine). The Nucleophile role is filled by D524. E527 is an active-site residue. A glycan (N-linked (GlcNAc...) asparagine) is linked at N563. Residue D600 is the Proton donor of the active site. N822 carries an N-linked (GlcNAc...) asparagine glycan.

The protein belongs to the glycosyl hydrolase 31 family. In terms of assembly, heterodimer of a catalytic subunit alpha (gls2) and a subunit beta (gtb1).

The protein resides in the endoplasmic reticulum. The catalysed reaction is N(4)-(alpha-D-Glc-(1-&gt;3)-alpha-D-Man-(1-&gt;2)-alpha-D-Man-(1-&gt;2)-alpha-D-Man-(1-&gt;3)-[alpha-D-Man-(1-&gt;2)-alpha-D-Man-(1-&gt;3)-[alpha-D-Man-(1-&gt;2)-alpha-D-Man-(1-&gt;6)]-alpha-D-Man-(1-&gt;6)]-beta-D-Man-(1-&gt;4)-beta-D-GlcNAc-(1-&gt;4)-beta-D-GlcNAc)-L-asparaginyl-[protein] + H2O = N(4)-(alpha-D-Man-(1-&gt;2)-alpha-D-Man-(1-&gt;2)-alpha-D-Man-(1-&gt;3)-[alpha-D-Man-(1-&gt;2)-alpha-D-Man-(1-&gt;3)-[alpha-D-Man-(1-&gt;2)-alpha-D-Man-(1-&gt;6)]-alpha-D-Man-(1-&gt;6)]-beta-D-Man-(1-&gt;4)-beta-D-GlcNAc-(1-&gt;4)-beta-D-GlcNAc)-L-asparaginyl-[protein] (N-glucan mannose isomer 9A1,2,3B1,2,3) + beta-D-glucose. It catalyses the reaction N(4)-(alpha-D-Glc-(1-&gt;3)-alpha-D-Glc-(1-&gt;3)-alpha-D-Man-(1-&gt;2)-alpha-D-Man-(1-&gt;2)-alpha-D-Man-(1-&gt;3)-[alpha-D-Man-(1-&gt;2)-alpha-D-Man-(1-&gt;3)-[alpha-D-Man-(1-&gt;2)-alpha-D-Man-(1-&gt;6)]-alpha-D-Man-(1-&gt;6)]-beta-D-Man-(1-&gt;4)-beta-D-GlcNAc-(1-&gt;4)-beta-D-GlcNAc)-L-asparaginyl-[protein] + H2O = N(4)-(alpha-D-Glc-(1-&gt;3)-alpha-D-Man-(1-&gt;2)-alpha-D-Man-(1-&gt;2)-alpha-D-Man-(1-&gt;3)-[alpha-D-Man-(1-&gt;2)-alpha-D-Man-(1-&gt;3)-[alpha-D-Man-(1-&gt;2)-alpha-D-Man-(1-&gt;6)]-alpha-D-Man-(1-&gt;6)]-beta-D-Man-(1-&gt;4)-beta-D-GlcNAc-(1-&gt;4)-beta-D-GlcNAc)-L-asparaginyl-[protein] + beta-D-glucose. The protein operates within glycan metabolism; N-glycan metabolism. Catalytic subunit of glucosidase 2, which cleaves sequentially the 2 innermost alpha-1,3-linked glucose residues from the Glc(2)Man(9)GlcNAc(2) oligosaccharide precursor of immature glycoproteins. This Schizosaccharomyces pombe (strain 972 / ATCC 24843) (Fission yeast) protein is Glucosidase 2 subunit alpha.